Consider the following 37-residue polypeptide: Cortex morphogenetic protein A (37 aa).

In terms of assembly, can form a complex with SpoIVA and ClpX.

It is found in the forespore. In terms of biological role, ensures proper spore envelope assembly. Represses premature cortex assembly until coat assembly successfully initiates. Also participates in a quality-control pathway that selectively removes defective sporulating cells through regulated cell death. Acts as an adaptator that delivers SpoIVA to the ClpXP proteolytic machinery for degradation, specifically in cells that improperly assemble the spore envelope. The chain is Cortex morphogenetic protein A from Bacillus subtilis (strain 168).